We begin with the raw amino-acid sequence, 246 residues long: Bis(5'-nucleosyl)-tetraphosphatase PrpE [asymmetrical] (246 aa).

It belongs to the PrpE family. The cofactor is Ni(2+).

It carries out the reaction P(1),P(4)-bis(5'-guanosyl) tetraphosphate + H2O = GMP + GTP + 2 H(+). Asymmetrically hydrolyzes Ap4p to yield AMP and ATP. The polypeptide is Bis(5'-nucleosyl)-tetraphosphatase PrpE [asymmetrical] (Bacillus cereus (strain AH820)).